Consider the following 814-residue polypeptide: Rho GTPase-activating protein 26 (814 aa).

The region spanning 7–262 (EFSDCCLDSP…MKENPLEHKT (256 aa)) is the BAR domain. A PH domain is found at 265-369 (PYTMEGYLYV…WMEAMDGREP (105 aa)). One can recognise a Rho-GAP domain in the interval 383-568 (AQLDSIGFSI…ILIENHEKIF (186 aa)). Low complexity predominate over residues 624-648 (LESVSSNPNSILNSSSSLQPNMNSS). The interval 624 to 696 (LESVSSNPNS…MPTSSTSSDS (73 aa)) is disordered. The span at 662 to 672 (SLPPNPSPTSP) shows a compositional bias: pro residues. At S668 the chain carries Phosphoserine. T670 bears the Phosphothreonine mark. S671 carries the phosphoserine modification. The segment covering 673-696 (LSPSWPMFSAPSSPMPTSSTSSDS) has biased composition (low complexity). Residues 756–814 (TPFRKAKALYACKAEHDSELSFTAGTVFDNVHPSQEPGWLEGTLNGKTGLIPENYVEFL) form the SH3 domain.

In terms of assembly, interacts with NYAP1, NYAP2 and MYO16. Interacts with MICAL1 and WDR44. Binds to the C-terminus of PTK2/FAK1. As to quaternary structure, (Microbial infection) Interacts with human parainfluenza virus type 2 proteins P and V. In terms of processing, phosphorylated in a PINK1-dependent fashion promoting retrograde mitochondrial trafficking and clustering.

Its subcellular location is the endosome membrane. It is found in the cytoplasm. The protein resides in the cell junction. The protein localises to the focal adhesion. It localises to the cytoskeleton. Its function is as follows. GTPase-activating protein for RHOA and CDC42. Facilitates mitochondrial quality control by promoting Parkin-mediated recruitment of autophagosomes to damaged mitochondria. Negatively regulates the growth of human parainfluenza virus type 2 by inhibiting hPIV-2-mediated RHOA activation via interaction with two of its viral proteins P and V. In terms of biological role, associates with MICAL1 on the endosomal membrane to promote Rab8-Rab10-dependent tubule extension. After dissociation of MICAL1, recruits WDR44 which connects the endoplasmic reticulum (ER) with the endosomal tubule, thereby participating in the export of a subset of neosynthesized proteins. The polypeptide is Rho GTPase-activating protein 26 (ARHGAP26) (Homo sapiens (Human)).